A 319-amino-acid chain; its full sequence is Tyrosine phosphatase-like protein N3 (319 aa).

The Tyrosine-protein phosphatase domain maps to 7 to 285; it reads SNLSIHEFWR…LIINKILLHS (279 aa).

It belongs to the protein-tyrosine phosphatase family.

In Microplitis demolitor bracovirus (isolate Webb) (MdBV), this protein is Tyrosine phosphatase-like protein N3 (N7).